Consider the following 461-residue polypeptide: Chromosomal replication initiator protein DnaA (461 aa).

The interval 1–68 (MINAWAQIEH…EKAAASVLGS (68 aa)) is domain I, interacts with DnaA modulators. The tract at residues 68–118 (SVPTITVVSGEEPAAAPRPVQVPAQKRPAAARTSGAEQMGLPLHYASRSAD) is domain II. The interval 119–336 (SIKWMHSFDE…SCLRNLLLKA (218 aa)) is domain III, AAA+ region. ATP is bound by residues G162, G164, K165, and T166. The tract at residues 337 to 461 (RLLNQQITMD…VERNGRIIHP (125 aa)) is domain IV, binds dsDNA.

Belongs to the DnaA family. In terms of assembly, oligomerizes as a right-handed, spiral filament on DNA at oriC.

Its subcellular location is the cytoplasm. Functionally, plays an essential role in the initiation and regulation of chromosomal replication. ATP-DnaA binds to the origin of replication (oriC) to initiate formation of the DNA replication initiation complex once per cell cycle. Binds the DnaA box (a 9 base pair repeat at the origin) and separates the double-stranded (ds)DNA. Forms a right-handed helical filament on oriC DNA; dsDNA binds to the exterior of the filament while single-stranded (ss)DNA is stabiized in the filament's interior. The ATP-DnaA-oriC complex binds and stabilizes one strand of the AT-rich DNA unwinding element (DUE), permitting loading of DNA polymerase. After initiation quickly degrades to an ADP-DnaA complex that is not apt for DNA replication. Binds acidic phospholipids. The chain is Chromosomal replication initiator protein DnaA from Oleidesulfovibrio alaskensis (strain ATCC BAA-1058 / DSM 17464 / G20) (Desulfovibrio alaskensis).